An 862-amino-acid polypeptide reads, in one-letter code: Fork head protein homolog 2 (862 aa).

An FHA domain is found at 83–152 (VSIGRNTDPL…NGAKVNFQRT (70 aa)). A DNA-binding region (fork-head) is located at residues 339–430 (VKPPHSYATM…QQEFLNKWNT (92 aa)). Disordered stretches follow at residues 498-528 (PSKG…QEQR), 611-663 (SDSA…GTTT), 698-730 (PERG…LQTS), and 750-846 (ESNN…ANAK). Positions 504–520 (PASQQSQPPVSHQNQSQ) are enriched in low complexity. Over residues 611 to 644 (SDSADKSTNNNGGTKMNLPAISTSSLDENGNLEP) the composition is skewed to polar residues. Residues 645–655 (TTTTSSGNSNS) are compositionally biased toward low complexity. Ser-708 carries the phosphoserine modification. The span at 712 to 726 (SNSNNTNNNGANNSN) shows a compositional bias: low complexity. Polar residues-rich tracts occupy residues 750–770 (ESNN…NVKS) and 778–788 (LQFSSTNNTPA). Basic and acidic residues predominate over residues 804–829 (IKAKENENATSEKDSDSNSNDLETKD). The segment covering 830–844 (INSSPLKNQGGSTAN) has biased composition (polar residues). Phosphoserine is present on residues Ser-832 and Ser-833.

In terms of assembly, interacts with MCM1. Interacts with NDD1. Interacts with the origin recognition complex (ORC) composed of ORC1 to ORC6.

The protein resides in the nucleus. It is found in the cytoplasm. It localises to the cytosol. Its function is as follows. Transcription factor that regulates the expression of the CLB2 cluster of genes during the G2/M phase of the mitotic cell cycle. The CLB2 cluster of genes includes mitotic regulators such as CLB1, CLB2, CDC5 and CDC20 as well as SWI5 and ACE2, transcription factors required for the subsequent temporal wave of cell cycle regulated gene expression in the M/G1 phase interval. Involved in HMRa silencing. FKH1 and FKH2 associate with the coding regions of active genes and influence, in opposing ways, transcriptional elongation and termination, and coordinate early transcription elongation and pre-mRNA processing. Both FKH1 and FKH2 play a role as regulators of lifespan in collaboration with the anaphase-promoting complex (APC), likely through combined regulation of stress response, genomic stability, and cell cycle regulation. FKH1 and FKH2 function also in controlling yeast cell morphology by preventing preudohyphal growth. Acts as a rate-limiting replication origin activator via its interaction with the origin recognition complex (ORC). The sequence is that of Fork head protein homolog 2 from Saccharomyces cerevisiae (strain ATCC 204508 / S288c) (Baker's yeast).